We begin with the raw amino-acid sequence, 335 residues long: N-acetyl-gamma-glutamyl-phosphate reductase (335 aa).

Cys156 is an active-site residue.

It belongs to the NAGSA dehydrogenase family. Type 1 subfamily.

The protein resides in the cytoplasm. It catalyses the reaction N-acetyl-L-glutamate 5-semialdehyde + phosphate + NADP(+) = N-acetyl-L-glutamyl 5-phosphate + NADPH + H(+). The protein operates within amino-acid biosynthesis; L-arginine biosynthesis; N(2)-acetyl-L-ornithine from L-glutamate: step 3/4. Functionally, catalyzes the NADPH-dependent reduction of N-acetyl-5-glutamyl phosphate to yield N-acetyl-L-glutamate 5-semialdehyde. This Aeromonas salmonicida (strain A449) protein is N-acetyl-gamma-glutamyl-phosphate reductase.